Reading from the N-terminus, the 330-residue chain is Zinc finger protein Gfi-1b (330 aa).

Residues 1–20 form an SNAG domain region; the sequence is MPRSFLVKSKKAHTYHQPRV. Positions 1 to 42 are disordered; that stretch reads MPRSFLVKSKKAHTYHQPRVQEDEPLWPPALTPVPRDQAPSN. Lys8 carries the N6,N6-dimethyllysine modification. An interaction with ARIH2 region spans residues 91-330; it reads GDSPLSDSPP…RHRESQHNLK (240 aa). 6 consecutive C2H2-type zinc fingers follow at residues 163 to 186, 192 to 214, 220 to 242, 248 to 270, 276 to 298, and 304 to 327; these read YHCV…RRSH, FACD…THVH, FECR…LLIH, YPCQ…TYIH, HKCQ…SRKH, and FSCE…ESQH. Residues 164-330 are mediates interaction with GATA1; sequence HCVKCNKVFS…RHRESQHNLK (167 aa).

Component of a RCOR-GFI-KDM1A-HDAC complex. Interacts directly with RCOR1, KDM1A and HDAC2. Forms a complex with GATA1. Interacts with histone methyltransferases EHMT2 and SUV39H1. Interacts with ARIH2 (via RING-type 2). Interacts with RUNX1T1. In terms of processing, methylation at Lys-8 in the SNAG domain seems required for the recruitment of the corepressor complex. In terms of tissue distribution, expressed in bone marrow and fetal liver, but also detectable in fetal spleen, fetal thymus, and testes. Detected in hematopoietic stem cells, erythroblasts, and megakaryocytes. Overexpressed in bone marrow of patients with erythroleukemia and megakaryocytic leukemia as well as in their corresponding leukemic cell lines, and markedly repressed in severe aplastic anemia (SAA).

The protein localises to the nucleus. Its function is as follows. Essential proto-oncogenic transcriptional regulator necessary for development and differentiation of erythroid and megakaryocytic lineages. Component of a RCOR-GFI-KDM1A-HDAC complex that suppresses, via histone deacetylase (HDAC) recruitment, a number of genes implicated in multilineage blood cell development and controls hematopoietic differentiation. Transcriptional repressor or activator depending on both promoter and cell type context; represses promoter activity of SOCS1 and SOCS3 and thus, may regulate cytokine signaling pathways. Cooperates with GATA1 to repress target gene transcription, such as the apoptosis regulator BCL2L1; GFI1B silencing in leukemic cell lines markedly increase apoptosis rate. Inhibits down-regulation of MYC and MYB as well as the cyclin-dependent kinase inhibitor CDKN1A/P21WAF1 in IL6-treated myelomonocytic cells. Represses expression of GATA3 in T-cell lymphomas and inhibits GATA1-mediated transcription; as GATA1 also mediates erythroid GFI1B transcription, both GATA1 and GFI1B participate in a feedback regulatory pathway controlling the expression of GFI1B gene in erythroid cells. Suppresses GATA1-mediated stimulation of GFI1B promoter through protein interaction. Binds to gamma-satellite DNA and to its own promoter, auto-repressing its own expression. Alters histone methylation by recruiting histone methyltransferase to target genes promoters. Plays a role in heterochromatin formation. The protein is Zinc finger protein Gfi-1b (GFI1B) of Homo sapiens (Human).